Reading from the N-terminus, the 218-residue chain is Cytochrome b6 (218 aa).

A helical transmembrane segment spans residues 35-55 (IFYCLGGITLVCFLIQFATGF). Cysteine 38 contributes to the heme c binding site. Heme b is bound by residues histidine 89 and histidine 103. The next 3 membrane-spanning stretches (helical) occupy residues 93-113 (ASMM…TGGF), 119-139 (LTWV…VTGY), and 189-209 (LHTF…FLMI). Positions 190 and 205 each coordinate heme b.

This sequence belongs to the cytochrome b family. PetB subfamily. In terms of assembly, the 4 large subunits of the cytochrome b6-f complex are cytochrome b6, subunit IV (17 kDa polypeptide, PetD), cytochrome f and the Rieske protein, while the 4 small subunits are PetG, PetL, PetM and PetN. The complex functions as a dimer. It depends on heme b as a cofactor. Heme c serves as cofactor.

Its subcellular location is the cellular thylakoid membrane. Functionally, component of the cytochrome b6-f complex, which mediates electron transfer between photosystem II (PSII) and photosystem I (PSI), cyclic electron flow around PSI, and state transitions. The protein is Cytochrome b6 of Prochlorococcus marinus (strain SARG / CCMP1375 / SS120).